Consider the following 1027-residue polypeptide: LLGL scribble cell polarity complex component 2 (1027 aa).

10 WD repeats span residues Ser36 to Leu69, Val76 to Phe117, Val132 to Ile169, Ala193 to Phe227, Leu233 to Pro268, Ala282 to Thr324, Val332 to Leu366, Thr388 to Ser464, Gln508 to Val583, and Thr592 to Ser653. Ser653 is modified (phosphoserine). A compositionally biased stretch (basic residues) spans Phe654–Pro669. The tract at residues Phe654–Ala678 is disordered. 4 WD repeats span residues Val715 to Gln771, Gly780 to Lys832, Leu837 to Ser890, and Val904 to Thr927. The interval Thr940 to Val981 is disordered. Positions Lys957–Gln970 are enriched in polar residues. Ser971 and Ser1022 each carry phosphoserine.

This sequence belongs to the WD repeat L(2)GL family. Interacts with GPSM2/LGN, PRKCI/aPKC and PARD6B/Par-6. The complex is enhanced during mitosis. Interacts with DCAF1. Phosphorylated at Ser-653 by PRKCI. Phosphorylation is enhanced during cell polarization induced by calcium. Phosphorylation may occur during the cell-cell contact-induced cell polarization and may contribute to the segregation of LLGL2 from the PRKCI/aPKC and PARD6B/Par-6 complex.

It localises to the cytoplasm. Its function is as follows. Part of a complex with GPSM2/LGN, PRKCI/aPKC and PARD6B/Par-6, which may ensure the correct organization and orientation of bipolar spindles for normal cell division. This complex plays roles in the initial phase of the establishment of epithelial cell polarity. In Mus musculus (Mouse), this protein is LLGL scribble cell polarity complex component 2 (Llgl2).